An 82-amino-acid chain; its full sequence is Proline, histidine and glycine-rich protein 1 (82 aa).

Positions 20-82 (HCGPPPGHGP…PGHPPPGPHH (63 aa)) are disordered.

The protein is Proline, histidine and glycine-rich protein 1 (PHGR1) of Homo sapiens (Human).